The primary structure comprises 250 residues: 5'/3'-nucleotidase SurE (250 aa).

D8, D9, S39, and N92 together coordinate a divalent metal cation.

The protein belongs to the SurE nucleotidase family. The cofactor is a divalent metal cation.

Its subcellular location is the cytoplasm. The catalysed reaction is a ribonucleoside 5'-phosphate + H2O = a ribonucleoside + phosphate. The enzyme catalyses a ribonucleoside 3'-phosphate + H2O = a ribonucleoside + phosphate. It carries out the reaction [phosphate](n) + H2O = [phosphate](n-1) + phosphate + H(+). Nucleotidase with a broad substrate specificity as it can dephosphorylate various ribo- and deoxyribonucleoside 5'-monophosphates and ribonucleoside 3'-monophosphates with highest affinity to 3'-AMP. Also hydrolyzes polyphosphate (exopolyphosphatase activity) with the preference for short-chain-length substrates (P20-25). Might be involved in the regulation of dNTP and NTP pools, and in the turnover of 3'-mononucleotides produced by numerous intracellular RNases (T1, T2, and F) during the degradation of various RNAs. The chain is 5'/3'-nucleotidase SurE from Wigglesworthia glossinidia brevipalpis.